The following is a 363-amino-acid chain: Flagellar P-ring protein (363 aa).

The first 18 residues, 1-18 (MWKKVLIAIVFITSFSFA), serve as a signal peptide directing secretion.

Belongs to the FlgI family. As to quaternary structure, the basal body constitutes a major portion of the flagellar organelle and consists of four rings (L,P,S, and M) mounted on a central rod.

The protein localises to the periplasm. Its subcellular location is the bacterial flagellum basal body. Its function is as follows. Assembles around the rod to form the L-ring and probably protects the motor/basal body from shearing forces during rotation. This Sulfurihydrogenibium sp. (strain YO3AOP1) protein is Flagellar P-ring protein.